The primary structure comprises 792 residues: Cadherin-11 (792 aa).

The N-terminal stretch at 1-22 (MKEDNCLHAALICLGMLYYSHA) is a signal peptide. Positions 23-53 (ITTEKLNHVRPSLHGHHEKGKEGQVLHRSKR) are excised as a propeptide. Cadherin domains follow at residues 54–159 (GWVW…PPEF), 160–268 (LHEN…PPKF), 269–383 (PQSV…PPVF), 384–486 (LKPS…DNAP), and 487–608 (KFAA…YILN). At 54 to 613 (GWVWNQFFVI…AYILNAGLST (560 aa)) the chain is on the extracellular side. N-linked (GlcNAc...) asparagine glycosylation is found at asparagine 455, asparagine 536, and asparagine 594. Residues 614–634 (GALIAILACIVILLVIVVLFV) traverse the membrane as a helical segment. Over 635 to 792 (TLKRQKKEPL…GSKDTFDDDS (158 aa)) the chain is Cytoplasmic.

Its subcellular location is the cell membrane. In terms of biological role, cadherins are calcium-dependent cell adhesion proteins. They preferentially interact with themselves in a homophilic manner in connecting cells; cadherins may thus contribute to the sorting of heterogeneous cell types. Required for proper focal adhesion assembly. Involved in the regulation of cell migration. This Gallus gallus (Chicken) protein is Cadherin-11 (CDH11).